The following is a 245-amino-acid chain: 1-(5-phosphoribosyl)-5-[(5-phosphoribosylamino)methylideneamino] imidazole-4-carboxamide isomerase (245 aa).

D8 serves as the catalytic Proton acceptor. The Proton donor role is filled by D130.

Belongs to the HisA/HisF family.

Its subcellular location is the cytoplasm. The enzyme catalyses 1-(5-phospho-beta-D-ribosyl)-5-[(5-phospho-beta-D-ribosylamino)methylideneamino]imidazole-4-carboxamide = 5-[(5-phospho-1-deoxy-D-ribulos-1-ylimino)methylamino]-1-(5-phospho-beta-D-ribosyl)imidazole-4-carboxamide. The protein operates within amino-acid biosynthesis; L-histidine biosynthesis; L-histidine from 5-phospho-alpha-D-ribose 1-diphosphate: step 4/9. This is 1-(5-phosphoribosyl)-5-[(5-phosphoribosylamino)methylideneamino] imidazole-4-carboxamide isomerase from Pseudomonas aeruginosa (strain LESB58).